The primary structure comprises 241 residues: Homeobox protein TGIF2LX (241 aa).

Disordered stretches follow at residues 1–58 (MEAA…GNLP) and 126–210 (TGKD…SPEE). Positions 21-39 (AKTQSPAQDTSIMSRNNAD) are enriched in polar residues. Positions 48-111 (EHKKKRKGNL…INARRRILPD (64 aa)) form a DNA-binding region, homeobox; TALE-type. Residues 195–206 (VSVTSPSSPELV) show a composition bias toward low complexity.

This sequence belongs to the TALE/TGIF homeobox family. In terms of tissue distribution, specifically expressed in adult testis.

Its subcellular location is the nucleus. Its function is as follows. May have a transcription role in testis. The polypeptide is Homeobox protein TGIF2LX (TGIF2LX) (Homo sapiens (Human)).